Reading from the N-terminus, the 700-residue chain is Elongation factor G 1 (700 aa).

One can recognise a tr-type G domain in the interval 8 to 290 (ERYRNIGISA…AVIEYLPSPI (283 aa)). Residues 17–24 (AHIDAGKT), 88–92 (DTPGH), and 142–145 (NKMD) each bind GTP.

Belongs to the TRAFAC class translation factor GTPase superfamily. Classic translation factor GTPase family. EF-G/EF-2 subfamily.

It is found in the cytoplasm. Its function is as follows. Catalyzes the GTP-dependent ribosomal translocation step during translation elongation. During this step, the ribosome changes from the pre-translocational (PRE) to the post-translocational (POST) state as the newly formed A-site-bound peptidyl-tRNA and P-site-bound deacylated tRNA move to the P and E sites, respectively. Catalyzes the coordinated movement of the two tRNA molecules, the mRNA and conformational changes in the ribosome. The sequence is that of Elongation factor G 1 from Bordetella avium (strain 197N).